We begin with the raw amino-acid sequence, 134 residues long: Global transcriptional regulator Spx (134 aa).

C10 and C13 form a disulfide bridge.

The protein belongs to the ArsC family. Spx subfamily. As to quaternary structure, interacts with the C-terminal domain of the alpha subunit of the RNAP.

It is found in the cytoplasm. Global transcriptional regulator that plays a key role in stress response and exerts either positive or negative regulation of genes. Acts by interacting with the C-terminal domain of the alpha subunit of the RNA polymerase (RNAP). This interaction can enhance binding of RNAP to the promoter region of target genes and stimulate their transcription, or block interaction of RNAP with activator. This is Global transcriptional regulator Spx from Streptococcus pyogenes serotype M1.